Here is a 45-residue protein sequence, read N- to C-terminus: Sperm-specific protein Phi-3 (45 aa).

Positions 1-45 are disordered; that stretch reads AKAKRSPRKKKAAVKKSSKSKAKKPKSPKKKKAAKKPAKKAAKKK.

It is found in the nucleus. The protein resides in the chromosome. In terms of biological role, involved in nuclear basic protein transition: histones are replaced by spermatid specific proteins which are themselves replaced by protamines in late spermatids. The chain is Sperm-specific protein Phi-3 from Mytilus californianus (California mussel).